We begin with the raw amino-acid sequence, 279 residues long: Coiled-coil domain-containing protein 106 (279 aa).

The stretch at 62 to 101 (KAQLHMALERNSWLQKRIEDLEEERDFLRCQLDKFISSAR) forms a coiled coil. Basic and acidic residues predominate over residues 109–121 (RMKPGPRRVDGDS). Positions 109–173 (RMKPGPRRVD…FGKTKARERQ (65 aa)) are disordered. Ser-129 is modified (phosphoserine). The short motif at 151–164 (KRQKQKGSTSRKRF) is the Bipartite nuclear localization signal element. The span at 151-167 (KRQKQKGSTSRKRFGKT) shows a compositional bias: basic residues.

Interacts with p53/TP53.

The protein localises to the nucleus. Promotes the degradation of p53/TP53 protein and inhibits its transactivity. In Mus musculus (Mouse), this protein is Coiled-coil domain-containing protein 106 (Ccdc106).